The primary structure comprises 135 residues: Large-conductance mechanosensitive channel (135 aa).

2 helical membrane passes run Phe-10–Gly-30 and Gly-76–Ile-96.

The protein belongs to the MscL family. In terms of assembly, homopentamer.

It localises to the cell inner membrane. Functionally, channel that opens in response to stretch forces in the membrane lipid bilayer. May participate in the regulation of osmotic pressure changes within the cell. This is Large-conductance mechanosensitive channel from Cronobacter sakazakii (strain ATCC BAA-894) (Enterobacter sakazakii).